A 215-amino-acid chain; its full sequence is Cytochrome b6 (215 aa).

The helical transmembrane segment at 32–52 (IFYCLGGITLTCFLVQVATGF) threads the bilayer. Residue Cys35 participates in heme c binding. Positions 86 and 100 each coordinate heme b. The next 3 membrane-spanning stretches (helical) occupy residues 90–110 (ASMMVLMMILHVFRVYLTGGF), 116–136 (LTWVTGVILAVLTVSFGVTGY), and 186–206 (LHTFVLPLLTAVFMLMHFLMI). 2 residues coordinate heme b: His187 and His202.

The protein belongs to the cytochrome b family. PetB subfamily. The 4 large subunits of the cytochrome b6-f complex are cytochrome b6, subunit IV (17 kDa polypeptide, PetD), cytochrome f and the Rieske protein, while the 4 small subunits are PetG, PetL, PetM and PetN. The complex functions as a dimer. It depends on heme b as a cofactor. Requires heme c as cofactor.

The protein localises to the plastid. It is found in the chloroplast thylakoid membrane. Its function is as follows. Component of the cytochrome b6-f complex, which mediates electron transfer between photosystem II (PSII) and photosystem I (PSI), cyclic electron flow around PSI, and state transitions. The protein is Cytochrome b6 of Klebsormidium bilatum (Filamentous green alga).